We begin with the raw amino-acid sequence, 467 residues long: Phosphoglucosamine mutase (467 aa).

S120 functions as the Phosphoserine intermediate in the catalytic mechanism. Residues S120, D261, D263, and D265 each coordinate Mg(2+). Position 120 is a phosphoserine (S120).

Belongs to the phosphohexose mutase family. It depends on Mg(2+) as a cofactor. In terms of processing, activated by phosphorylation.

It catalyses the reaction alpha-D-glucosamine 1-phosphate = D-glucosamine 6-phosphate. Catalyzes the conversion of glucosamine-6-phosphate to glucosamine-1-phosphate. The chain is Phosphoglucosamine mutase from Parafrankia sp. (strain EAN1pec).